A 300-amino-acid chain; its full sequence is tRNA dimethylallyltransferase (300 aa).

9-16 is a binding site for ATP; that stretch reads GPTASGKS. 11 to 16 is a binding site for substrate; the sequence is TASGKS. The interval 34–37 is interaction with substrate tRNA; the sequence is DSKQ.

Belongs to the IPP transferase family. In terms of assembly, monomer. Mg(2+) serves as cofactor.

It catalyses the reaction adenosine(37) in tRNA + dimethylallyl diphosphate = N(6)-dimethylallyladenosine(37) in tRNA + diphosphate. In terms of biological role, catalyzes the transfer of a dimethylallyl group onto the adenine at position 37 in tRNAs that read codons beginning with uridine, leading to the formation of N6-(dimethylallyl)adenosine (i(6)A). The sequence is that of tRNA dimethylallyltransferase from Ehrlichia ruminantium (strain Welgevonden).